The sequence spans 378 residues: Erythronate-4-phosphate dehydrogenase (378 aa).

Positions 45 and 66 each coordinate substrate. NAD(+) contacts are provided by Asp-146 and Thr-175. The active site involves Arg-208. Residue Asp-232 coordinates NAD(+). Residue Glu-237 is part of the active site. His-254 serves as the catalytic Proton donor. Gly-257 lines the NAD(+) pocket. Residue Tyr-258 participates in substrate binding.

Belongs to the D-isomer specific 2-hydroxyacid dehydrogenase family. PdxB subfamily. In terms of assembly, homodimer.

It localises to the cytoplasm. It catalyses the reaction 4-phospho-D-erythronate + NAD(+) = (R)-3-hydroxy-2-oxo-4-phosphooxybutanoate + NADH + H(+). The protein operates within cofactor biosynthesis; pyridoxine 5'-phosphate biosynthesis; pyridoxine 5'-phosphate from D-erythrose 4-phosphate: step 2/5. In terms of biological role, catalyzes the oxidation of erythronate-4-phosphate to 3-hydroxy-2-oxo-4-phosphonooxybutanoate. The protein is Erythronate-4-phosphate dehydrogenase of Enterobacter sp. (strain 638).